The following is a 369-amino-acid chain: Nuclear hormone receptor family member nhr-64 (369 aa).

Positions 67 to 142 (EKCQVDKAKR…ASTRGLRTTV (76 aa)) form a DNA-binding region, nuclear receptor. 2 consecutive NR C4-type zinc fingers follow at residues 70-90 (QVDK…CLRK) and 106-130 (PANP…TLIR). The NR LBD domain maps to 120-352 (PDDPLLDTLI…NLMLELMLPN (233 aa)).

This sequence belongs to the nuclear hormone receptor family.

It is found in the nucleus. In terms of biological role, orphan nuclear receptor. This Caenorhabditis elegans protein is Nuclear hormone receptor family member nhr-64 (nhr-64).